The primary structure comprises 434 residues: 3-phosphoshikimate 1-carboxyvinyltransferase (434 aa).

Positions 15, 16, and 20 each coordinate 3-phosphoshikimate. Position 15 (Lys-15) interacts with phosphoenolpyruvate. Phosphoenolpyruvate-binding residues include Gly-96 and Arg-124. 5 residues coordinate 3-phosphoshikimate: Ser-169, Gln-171, Ser-195, Asp-319, and Lys-346. Gln-171 is a binding site for phosphoenolpyruvate. Asp-319 acts as the Proton acceptor in catalysis. Positions 350 and 394 each coordinate phosphoenolpyruvate.

This sequence belongs to the EPSP synthase family. Monomer.

It localises to the cytoplasm. The catalysed reaction is 3-phosphoshikimate + phosphoenolpyruvate = 5-O-(1-carboxyvinyl)-3-phosphoshikimate + phosphate. Its pathway is metabolic intermediate biosynthesis; chorismate biosynthesis; chorismate from D-erythrose 4-phosphate and phosphoenolpyruvate: step 6/7. Its function is as follows. Catalyzes the transfer of the enolpyruvyl moiety of phosphoenolpyruvate (PEP) to the 5-hydroxyl of shikimate-3-phosphate (S3P) to produce enolpyruvyl shikimate-3-phosphate and inorganic phosphate. The sequence is that of 3-phosphoshikimate 1-carboxyvinyltransferase from Chlorobium phaeobacteroides (strain DSM 266 / SMG 266 / 2430).